A 370-amino-acid polypeptide reads, in one-letter code: Immunoglobulin superfamily member 5 (370 aa).

The signal sequence occupies residues 1–24 (MEGSWRDVLAVLVILAQLTASGSS). Ig-like V-type domains are found at residues 25–125 (YQII…LSVQ) and 128–215 (GTLN…KSLT). The Extracellular portion of the chain corresponds to 25–239 (YQIIEGPQNV…EEGPALPTWA (215 aa)). 2 N-linked (GlcNAc...) asparagine glycosylation sites follow: asparagine 33 and asparagine 45. Cysteine 46 and cysteine 109 are disulfide-bonded. Residues asparagine 146, asparagine 196, and asparagine 217 are each glycosylated (N-linked (GlcNAc...) asparagine). Cysteines 149 and 201 form a disulfide. A helical transmembrane segment spans residues 240–260 (IILLAVAFSLLLILIIVLIII). The Cytoplasmic segment spans residues 261 to 370 (FCCCCASRRE…PQKVRNVTLV (110 aa)). The disordered stretch occupies residues 284–359 (ANMRTNKADP…THPRVSFDIA (76 aa)). Residues 289 to 301 (NKADPETKLKGGK) show a composition bias toward basic and acidic residues.

Belongs to the immunoglobulin superfamily. Interacts with MAGI1 at tight junctions, forms a tripartite complex with NPHS1. Interacts with LNX1 isoform 2 via its PDZ 2 domain, it may also interact with other isoforms containing this domain. Post-translationally, N-glycosylated. As to expression, localized to kidney glomeruli and small intestinal epithelial cells. In kidney glomeruli, it is localized at slit diaphragm. Also found in spermatogonia, gonocytes, hematopoietic stem cells and Sertoli cells.

It is found in the apical cell membrane. Its subcellular location is the cell junction. It localises to the tight junction. Provides, together with MAGI1, an adhesion machinery at tight junctions, which may regulate the permeability of kidney glomerulus and small intestinal epithelial cells. Mediates calcium-independent homophilic cell adhesion. In testis, it may function as a cell adhesion molecule rather than a tight-junction protein. It may participate in the adhesion between spermatogonia-spermatogonia, spermatogonia-Sertoli cells, and Sertoli cells-Sertoli cells. The sequence is that of Immunoglobulin superfamily member 5 (Igsf5) from Mus musculus (Mouse).